Here is a 231-residue protein sequence, read N- to C-terminus: Probable transglycosylase SceD (231 aa).

The N-terminal stretch at 1–27 (MKKTLLASSLAVGLGIVAGNAGHEAHA) is a signal peptide. Residues 93–153 (SAQAPATNNV…ESKASEGSSV (61 aa)) form a disordered region. Polar residues predominate over residues 96 to 116 (APATNNVAPSADQANQVQSQE). The span at 119–137 (APQNAQTQQPQASTSNNSQ) shows a compositional bias: low complexity. The span at 138–153 (VTATPTESKASEGSSV) shows a compositional bias: polar residues.

It belongs to the transglycosylase family. SceD subfamily.

The protein localises to the secreted. Functionally, is able to cleave peptidoglycan and affects clumping and separation of bacterial cells. The sequence is that of Probable transglycosylase SceD (sceD) from Staphylococcus aureus (strain bovine RF122 / ET3-1).